The sequence spans 76 residues: Theta defensin subunit A (76 aa).

The N-terminal stretch at 1–22 (MRTFALLTAMLLLVALHAQAEA) is a signal peptide. Residues 23–64 (RQARADEAAAQQQPGADDQGMAHSFTWPENAALPLSESAKGL) constitute a propeptide that is removed on maturation. A disordered region spans residues 25-45 (ARADEAAAQQQPGADDQGMAH). Over residues 30-44 (AAAQQQPGADDQGMA) the composition is skewed to low complexity. Residue arginine 65 forms a Cyclopeptide (Arg-Cys) (interchain with C-73 in subunit A); in form BTD-3 linkage. A Cyclopeptide (Arg-Cys) (interchain with C-73 in subunit B); in form BTD-1 cross-link involves residue arginine 65. Arginine 65 participates in a covalent cross-link: Cyclopeptide (Arg-Cys) (interchain with C-73 in subunit C); in form BTD-4. Arginine 65 is covalently cross-linked (Cyclopeptide (Arg-Cys) (interchain with C-73 in subunit D); in form BTD-7). Residues cysteine 68 and cysteine 73 are joined by a disulfide bond. Cysteine 73 participates in a covalent cross-link: Cyclopeptide (Cys-Arg) (interchain with R-65 in subunit A); in form BTD-3. Residue cysteine 73 forms a Cyclopeptide (Cys-Arg) (interchain with R-65 in subunit B); in form BTD-1 linkage. Residue cysteine 73 forms a Cyclopeptide (Cys-Arg) (interchain with R-65 in subunit C); in form BTD-4 linkage. Residue cysteine 73 forms a Cyclopeptide (Cys-Arg) (interchain with R-65 in subunit D); in form BTD-7 linkage. The propeptide occupies 74–76 (RLL).

This sequence belongs to the alpha-defensin family. Theta subfamily. In terms of assembly, BTD-1 is a cyclic heterodimer composed of subunits A and B; disulfide-linked. BTD-3 is a cyclic homodimer composed of two subunits A; disulfide-linked. BTD-4 is a cyclic heterodimer composed of subunits A and C; disulfide-linked. BTD-7 is a cyclic heterodimer composed of subunits A and D; disulfide-linked. Post-translationally, forms a cyclic peptide with subunit B (BTD-1), subunit A (BTD-3), subunit C (BTD-4), or subunit D (BTD-7). An additional intersubunit disulfide bond is formed.

Its function is as follows. BTD-1, BTD-3, BTD-4 and BTD-7 have antimicrobial activity against the Gram-negative bacterium E.coli ML35, the Gram-positive bacterium S.aureus 502a, and the fungus C.albicans 16820. BTD-3 is more effective against E.coli than BTD-1, BTD-4 and BTD-7. This chain is Theta defensin subunit A (BTDA), found in Papio anubis (Olive baboon).